The following is a 563-amino-acid chain: MANNGTILKISRSLKNAVSAILQGYGDGQEPVTETSAELHRLCGCLELLLQFDQKEQRSFLGARKDYWDFLFTALRRHRGYTEQMSFICSQDKLKTSLGKGRAFIRLCLARGQLAESMQLCLLNPQLTREWYGPRSPLLCAELQEDILDSLYALNGVAFNLDLQRPDLDEAWPMFSESRCSSPSRTGKRRPGKPKGFPEEVRCSRGEQLQEPDTGGTSCLQDATREDRTPDLCKPLQPSHLPTFLEEKREDSRSLSCPQSTWETEREGFQLDQKDGGPKPRKFLENSTASIQQQRSRAKDVKMQLTGRKVEGKGSLSGTEDQRTTEGIQKRAADWDLGQGLMAPGLQGREDAELGYRCEWNQPDVLRQSWVLGTKKSSPTEKPQEWTGVTSGTMQEDGSEVPLQQEVIKDPGYGLQLAKEQAQCQEQLRAQEAELQALQEQLSRCQKERALLQVKLEQKQQEAERRDAMYQTELEGQRDLVQAMKRRVLELIHEKDLQWQRLQQLSTVAPGHCIGCNKVFRRLSRRYPCRLCGGLVCHACSVDYKKRERCCPTCAQQEEIQDT.

In terms of domain architecture, RUN spans 33-166; it reads TETSAELHRL…VAFNLDLQRP (134 aa). Disordered regions lie at residues 176-327 and 375-397; these read SESR…TTEG and KKSS…MQED. Basic and acidic residues-rich tracts occupy residues 196–205 and 263–284; these read GFPEEVRCSR and ETER…RKFL. A compositionally biased stretch (polar residues) spans 285–295; the sequence is ENSTASIQQQR. Residues 297–312 are compositionally biased toward basic and acidic residues; the sequence is RAKDVKMQLTGRKVEG. Polar residues predominate over residues 385–396; sequence EWTGVTSGTMQE. Residues 421–462 adopt a coiled-coil conformation; the sequence is QAQCQEQLRAQEAELQALQEQLSRCQKERALLQVKLEQKQQE. The segment at 428–558 adopts an FYVE-type zinc-finger fold; that stretch reads LRAQEAELQA…RCCPTCAQQE (131 aa). Cys-513, Cys-516, Cys-529, Cys-532, Cys-537, Cys-540, Cys-551, and Cys-554 together coordinate Zn(2+).

In terms of assembly, forms homodimers (via coiled coil domain). Forms a ternary complex with RAB7A and LAMP2; the interaction with RAB7A is mediated by RUFY4 (via RUN and coiled coil domains). Interacts with GTP-, but not GDP-bound ARL8A and ARL8B. Interacts with dynactin/DCTN1 and the dynein intermediate chain DYNC1I1/2. Expressed in dendritic cells.

The protein localises to the cytoplasmic vesicle. Its subcellular location is the autophagosome. It localises to the lysosome. Functionally, ARL8 effector that promotes the coupling of endolysosomes to dynein-dynactin for retrograde transport along microtubules. Acts by binding both GTP-bound ARL8 and dynein-dynactin. In nonneuronal cells, promotes concentration of endolysosomes in the juxtanuclear area. In hippocampal neurons, drives retrograde transport of endolysosomes from the axon to the soma. Positive regulator of macroautophagy in dendritic cells. Increases autophagic flux, probably by stimulating both autophagosome formation and facilitating tethering with lysosomes. Binds to phosphatidylinositol 3-phosphate (PtdIns3P) through its FYVE-type zinc finger. Positive regulator of osteosclast bone-resorbing activity, possibly by promoting late endosome-lysosome fusion by acting as an adapter protein between RAB7A on late endosomes and LAMP2 on primary lysosomes. The chain is RUN and FYVE domain-containing protein 4 (Rufy4) from Mus musculus (Mouse).